We begin with the raw amino-acid sequence, 307 residues long: Elongation factor Ts (307 aa).

The segment at 80 to 83 (TDFV) is involved in Mg(2+) ion dislocation from EF-Tu.

This sequence belongs to the EF-Ts family.

Its subcellular location is the cytoplasm. Its function is as follows. Associates with the EF-Tu.GDP complex and induces the exchange of GDP to GTP. It remains bound to the aminoacyl-tRNA.EF-Tu.GTP complex up to the GTP hydrolysis stage on the ribosome. The chain is Elongation factor Ts from Variovorax paradoxus (strain S110).